Consider the following 178-residue polypeptide: Ribosome maturation factor RimM (178 aa).

The PRC barrel domain maps to 100–178 (TDGEYYWYQL…EMKVEWDADF (79 aa)).

It belongs to the RimM family. As to quaternary structure, binds ribosomal protein uS19.

The protein resides in the cytoplasm. In terms of biological role, an accessory protein needed during the final step in the assembly of 30S ribosomal subunit, possibly for assembly of the head region. Essential for efficient processing of 16S rRNA. May be needed both before and after RbfA during the maturation of 16S rRNA. It has affinity for free ribosomal 30S subunits but not for 70S ribosomes. The protein is Ribosome maturation factor RimM of Pseudomonas fluorescens (strain SBW25).